A 265-amino-acid chain; its full sequence is Small ribosomal subunit protein uS5 (265 aa).

Residues 1–25 (MADTTTAAQADQKPTRAFGAGRPQR) are compositionally biased toward low complexity. The disordered stretch occupies residues 1–49 (MADTTTAAQADQKPTRAFGAGRPQRGAGGAPQRGGPRPQRGGQGETKSW). The residue at position 2 (A2) is an N-acetylalanine. The 64-residue stretch at 89-152 (LKDEVMKIVP…VAAKLSVIPV (64 aa)) folds into the S5 DRBM domain.

The protein belongs to the universal ribosomal protein uS5 family.

Its function is as follows. Component of the ribosome, a large ribonucleoprotein complex responsible for the synthesis of proteins in the cell. The small ribosomal subunit (SSU) binds messenger RNAs (mRNAs) and translates the encoded message by selecting cognate aminoacyl-transfer RNA (tRNA) molecules. The large subunit (LSU) contains the ribosomal catalytic site termed the peptidyl transferase center (PTC), which catalyzes the formation of peptide bonds, thereby polymerizing the amino acids delivered by tRNAs into a polypeptide chain. The nascent polypeptides leave the ribosome through a tunnel in the LSU and interact with protein factors that function in enzymatic processing, targeting, and the membrane insertion of nascent chains at the exit of the ribosomal tunnel. Plays a role in the assembly and function of the 40S ribosomal subunit. Mutations in this protein affects the control of translational fidelity. Involved in nucleolar processing of pre-18S ribosomal RNA and ribosome assembly. The chain is Small ribosomal subunit protein uS5 (rps2) from Dictyostelium discoideum (Social amoeba).